Reading from the N-terminus, the 530-residue chain is Formate--tetrahydrofolate ligase (530 aa).

Residue 46–53 (TPEGEGKT) coordinates ATP.

It belongs to the formate--tetrahydrofolate ligase family.

The enzyme catalyses (6S)-5,6,7,8-tetrahydrofolate + formate + ATP = (6R)-10-formyltetrahydrofolate + ADP + phosphate. Its pathway is one-carbon metabolism; tetrahydrofolate interconversion. This chain is Formate--tetrahydrofolate ligase, found in Malacoplasma penetrans (strain HF-2) (Mycoplasma penetrans).